The sequence spans 436 residues: NADH-quinone oxidoreductase subunit D 1 (436 aa).

The protein belongs to the complex I 49 kDa subunit family. NDH-1 is composed of 14 different subunits. Subunits NuoB, C, D, E, F, and G constitute the peripheral sector of the complex.

It localises to the cell inner membrane. The catalysed reaction is a quinone + NADH + 5 H(+)(in) = a quinol + NAD(+) + 4 H(+)(out). Its function is as follows. NDH-1 shuttles electrons from NADH, via FMN and iron-sulfur (Fe-S) centers, to quinones in the respiratory chain. The immediate electron acceptor for the enzyme in this species is believed to be ubiquinone. Couples the redox reaction to proton translocation (for every two electrons transferred, four hydrogen ions are translocated across the cytoplasmic membrane), and thus conserves the redox energy in a proton gradient. The sequence is that of NADH-quinone oxidoreductase subunit D 1 from Stenotrophomonas maltophilia (strain R551-3).